The chain runs to 148 residues: Deoxyuridine 5'-triphosphate nucleotidohydrolase (148 aa).

Substrate is bound by residues 67–69 (RSG), Asn-80, 84–86 (LID), and Met-94.

This sequence belongs to the dUTPase family. Requires Mg(2+) as cofactor.

It catalyses the reaction dUTP + H2O = dUMP + diphosphate + H(+). It functions in the pathway pyrimidine metabolism; dUMP biosynthesis; dUMP from dCTP (dUTP route): step 2/2. Functionally, this enzyme is involved in nucleotide metabolism: it produces dUMP, the immediate precursor of thymidine nucleotides and it decreases the intracellular concentration of dUTP so that uracil cannot be incorporated into DNA. This chain is Deoxyuridine 5'-triphosphate nucleotidohydrolase, found in Francisella philomiragia subsp. philomiragia (strain ATCC 25017 / CCUG 19701 / FSC 153 / O#319-036).